Reading from the N-terminus, the 200-residue chain is Mediator of RNA polymerase II transcription subunit 22 (200 aa).

Residues 93 to 122 (SVNEAIDQRNQQLRALQEECDRKLITLRDE) adopt a coiled-coil conformation. Residues 169-200 (PLLASPETGAGPLQSAAPVHSHGGGPGPTEHT) form a disordered region. Residues 190-200 (HGGGPGPTEHT) show a composition bias toward gly residues.

It belongs to the Mediator complex subunit 22 family. Component of the Mediator complex, which is composed of MED1, MED4, MED6, MED7, MED8, MED9, MED10, MED11, MED12, MED13, MED13L, MED14, MED15, MED16, MED17, MED18, MED19, MED20, MED21, MED22, MED23, MED24, MED25, MED26, MED27, MED29, MED30, MED31, CCNC, CDK8 and CDC2L6/CDK11. The MED12, MED13, CCNC and CDK8 subunits form a distinct module termed the CDK8 module. Mediator containing the CDK8 module is less active than Mediator lacking this module in supporting transcriptional activation. Individual preparations of the Mediator complex lacking one or more distinct subunits have been variously termed ARC, CRSP, DRIP, PC2, SMCC and TRAP.

The protein resides in the nucleus. Its function is as follows. Component of the Mediator complex, a coactivator involved in the regulated transcription of nearly all RNA polymerase II-dependent genes. Mediator functions as a bridge to convey information from gene-specific regulatory proteins to the basal RNA polymerase II transcription machinery. Mediator is recruited to promoters by direct interactions with regulatory proteins and serves as a scaffold for the assembly of a functional preinitiation complex with RNA polymerase II and the general transcription factors. The sequence is that of Mediator of RNA polymerase II transcription subunit 22 (Med22) from Mus musculus (Mouse).